Here is a 217-residue protein sequence, read N- to C-terminus: MRYTVLIALQGALLLLLLIDDGQGQSPYPYPGMPCNSSRQCGLGTCVHSRCAHCSSDGTLCSPEDPTMVWPCCPESSCQLVVGLPSLVNHYNCLPNQCTDSSQCPGGFGCMTRRSKCELCKADGEACNSPYLDWRKDKECCSGYCHTEARGLEGVCIDPKKIFCTPKNPWQLAPYPPSYHQPTTLRPPTSLYDSWLMSGFLVKSTTAPSTQEEEDDY.

Residues 1-24 (MRYTVLIALQGALLLLLLIDDGQG) form the signal peptide.

This is an uncharacterized protein from Aedes vexans (Inland floodwater mosquito).